A 128-amino-acid chain; its full sequence is Con-Ins F1 (128 aa).

Residues Met1 to Gly24 form the signal peptide. 4 disulfides stabilise this stretch: Cys29–Cys104, Cys41–Cys107, Cys53–Cys120, and Cys106–Cys111. The propeptide at Leu59–Arg89 is c peptide. Glu115 carries the 4-carboxyglutamate; partial modification. A Serine amide modification is found at Ser127.

It belongs to the insulin family. Heterodimer of A and B chains; disulfide-linked. As to expression, expressed by the venom gland.

It localises to the secreted. This venom insulin facilitates prey capture by rapidly inducing hypoglycemic shock. Intraperitoneal injection of this peptide into zebrafish lowers blood glucose with the same potency than human insulin. In vivo, when applied to water, this peptide reduces overall locomotor activity of zebrafish larvae, observed as a significant decrease in the percentage of time spent swimming and movement frequency. This Conus floridulus (Cone snail) protein is Con-Ins F1.